A 146-amino-acid polypeptide reads, in one-letter code: MKLHELKPAEGSRKVRNRVGRGIGSGNGKTAGRGHKGQNARSGGGVRLGFEGGQTPLFRRLPKRGFTNINRKEFTIVNLSTLNRFEDGTEVTPELLLETGVISKLNDGVKILASGAVEKKLTVKAHKFSSSAKEAIEAAGGSVEVI.

Basic and acidic residues predominate over residues 1–13; the sequence is MKLHELKPAEGSR. The interval 1–51 is disordered; the sequence is MKLHELKPAEGSRKVRNRVGRGIGSGNGKTAGRGHKGQNARSGGGVRLGFE. Composition is skewed to gly residues over residues 21-31 and 42-51; these read RGIGSGNGKTA and SGGGVRLGFE.

The protein belongs to the universal ribosomal protein uL15 family. As to quaternary structure, part of the 50S ribosomal subunit.

Binds to the 23S rRNA. The chain is Large ribosomal subunit protein uL15 from Bacillus mycoides (strain KBAB4) (Bacillus weihenstephanensis).